The sequence spans 316 residues: Probable prolyl 4-hydroxylase 7 (316 aa).

Residues M1–R4 are Cytoplasmic-facing. The chain crosses the membrane as a helical; Signal-anchor for type II membrane protein span at residues I5–P24. Over N25 to S316 the chain is Lumenal. Residue N96 is glycosylated (N-linked (GlcNAc...) asparagine). Residues N139–V261 enclose the Fe2OG dioxygenase domain. Fe cation is bound by residues H157 and D159. N233 carries N-linked (GlcNAc...) asparagine glycosylation. Residue H242 coordinates Fe cation. 2-oxoglutarate is bound at residue K252. In terms of domain architecture, ShKT spans C274–C314. 3 disulfides stabilise this stretch: C274–C314, C281–C307, and C290–C311. N-linked (GlcNAc...) asparagine glycosylation is present at N278.

The protein belongs to the P4HA family. The cofactor is Fe(2+). Requires L-ascorbate as cofactor.

It is found in the endoplasmic reticulum membrane. The enzyme catalyses L-prolyl-[collagen] + 2-oxoglutarate + O2 = trans-4-hydroxy-L-prolyl-[collagen] + succinate + CO2. Its function is as follows. Catalyzes the post-translational formation of 4-hydroxyproline in -Xaa-Pro-Gly- sequences in proline-rich peptide sequences of plant glycoproteins and other proteins. Hydroxyprolines are important constituent of many plant cell wall glycoproteins such as extensins, hydroxyproline-rich glycoproteins, lectins and arabinogalactan proteins. This Arabidopsis thaliana (Mouse-ear cress) protein is Probable prolyl 4-hydroxylase 7.